A 395-amino-acid polypeptide reads, in one-letter code: Chorismate synthase (395 aa).

2 residues coordinate NADP(+): arginine 40 and arginine 46. Residues 135-137 and 256-257 each bind FMN; these read RAS and QA. The span at 272–283 shows a compositional bias: basic and acidic residues; that stretch reads RRGSQAHDEMRP. The segment at 272–296 is disordered; the sequence is RRGSQAHDEMRPGPDGILRSTNRAG. FMN contacts are provided by residues glycine 300, 315-319, and arginine 341; that span reads KPIST.

It belongs to the chorismate synthase family. Homotetramer. It depends on FMNH2 as a cofactor.

It carries out the reaction 5-O-(1-carboxyvinyl)-3-phosphoshikimate = chorismate + phosphate. It functions in the pathway metabolic intermediate biosynthesis; chorismate biosynthesis; chorismate from D-erythrose 4-phosphate and phosphoenolpyruvate: step 7/7. Functionally, catalyzes the anti-1,4-elimination of the C-3 phosphate and the C-6 proR hydrogen from 5-enolpyruvylshikimate-3-phosphate (EPSP) to yield chorismate, which is the branch point compound that serves as the starting substrate for the three terminal pathways of aromatic amino acid biosynthesis. This reaction introduces a second double bond into the aromatic ring system. This chain is Chorismate synthase, found in Rhodococcus opacus (strain B4).